The primary structure comprises 146 residues: Zinc metalloproteinase-disintegrin salmosin-3 (146 aa).

The 57-residue stretch at 1–57 folds into the Peptidase M12B domain; the sequence is SCPCDANSCIMSATLSNEPSSRFSDCSFSLPSRFSDCSFNQYSSDIIHYHECLLNEP. Intrachain disulfides connect Cys-2–Cys-37, Cys-4–Cys-9, Cys-68–Cys-87, Cys-79–Cys-97, Cys-81–Cys-92, Cys-91–Cys-114, Cys-105–Cys-111, Cys-110–Cys-135, and Cys-123–Cys-142. Residues 65–146 form the Disintegrin domain; that stretch reads PPVCGNYYPE…GQSGVCPRNT (82 aa). The Cell attachment site motif lies at 127–129; that stretch reads RGD.

The protein belongs to the venom metalloproteinase (M12B) family. P-II subfamily. P-IIb sub-subfamily. Monomer (disintegrin). Zn(2+) is required as a cofactor. Expressed by the venom gland.

It is found in the secreted. Snake venom zinc metalloproteinase that inhibits ADP-induced platelet aggregation (probably by binding integrin alpha-IIb/beta-3 (ITGA2B/ITGB3)) and degrades fibrinogen. This chain is Zinc metalloproteinase-disintegrin salmosin-3, found in Gloydius brevicauda (Korean slamosa snake).